The sequence spans 503 residues: Arabinose import ATP-binding protein AraG 1 (503 aa).

2 ABC transporter domains span residues 5–240 (LRFD…MVGR) and 251–497 (RALG…LPQT). An ATP-binding site is contributed by 37–44 (GENGAGKS).

The protein belongs to the ABC transporter superfamily. Arabinose importer (TC 3.A.1.2.2) family. As to quaternary structure, the complex is composed of two ATP-binding proteins (AraG), two transmembrane proteins (AraH) and a solute-binding protein (AraF).

It is found in the cell inner membrane. The enzyme catalyses L-arabinose(out) + ATP + H2O = L-arabinose(in) + ADP + phosphate + H(+). Part of the ABC transporter complex AraFGH involved in arabinose import. Responsible for energy coupling to the transport system. The chain is Arabinose import ATP-binding protein AraG 1 from Burkholderia ambifaria (strain ATCC BAA-244 / DSM 16087 / CCUG 44356 / LMG 19182 / AMMD) (Burkholderia cepacia (strain AMMD)).